The chain runs to 162 residues: Phosphopantetheine adenylyltransferase (162 aa).

Substrate is bound at residue T9. Residues 9 to 10 (TF) and H17 each bind ATP. Substrate contacts are provided by K41, L73, and R87. Residues 88 to 90 (GLR), E98, and 123 to 129 (FAFLSST) contribute to the ATP site.

This sequence belongs to the bacterial CoaD family. As to quaternary structure, homohexamer. The cofactor is Mg(2+).

It localises to the cytoplasm. The enzyme catalyses (R)-4'-phosphopantetheine + ATP + H(+) = 3'-dephospho-CoA + diphosphate. It functions in the pathway cofactor biosynthesis; coenzyme A biosynthesis; CoA from (R)-pantothenate: step 4/5. In terms of biological role, reversibly transfers an adenylyl group from ATP to 4'-phosphopantetheine, yielding dephospho-CoA (dPCoA) and pyrophosphate. The protein is Phosphopantetheine adenylyltransferase of Vibrio atlanticus (strain LGP32) (Vibrio splendidus (strain Mel32)).